Here is a 496-residue protein sequence, read N- to C-terminus: Inosine-5'-monophosphate dehydrogenase (496 aa).

2 CBS domains span residues 96-152 (VIKD…TKKV) and 156-212 (MTKD…PQAA). Residues D247 and 299–301 (GIG) each bind NAD(+). G301 and G303 together coordinate K(+). S304 contacts IMP. Residue C306 coordinates K(+). The active-site Thioimidate intermediate is C306. Residues 339 to 341 (DGG), 362 to 363 (GS), and 386 to 390 (YRGMG) contribute to the IMP site. R405 acts as the Proton acceptor in catalysis. Residue E423 coordinates IMP. K(+) contacts are provided by E477, S478, and H479.

Belongs to the IMPDH/GMPR family. In terms of assembly, homotetramer. K(+) serves as cofactor.

The catalysed reaction is IMP + NAD(+) + H2O = XMP + NADH + H(+). The protein operates within purine metabolism; XMP biosynthesis via de novo pathway; XMP from IMP: step 1/1. Mycophenolic acid (MPA) is a non-competitive inhibitor that prevents formation of the closed enzyme conformation by binding to the same site as the amobile flap. In contrast, mizoribine monophosphate (MZP) is a competitive inhibitor that induces the closed conformation. MPA is a potent inhibitor of mammalian IMPDHs but a poor inhibitor of the bacterial enzymes. MZP is a more potent inhibitor of bacterial IMPDH. Functionally, catalyzes the conversion of inosine 5'-phosphate (IMP) to xanthosine 5'-phosphate (XMP), the first committed and rate-limiting step in the de novo synthesis of guanine nucleotides, and therefore plays an important role in the regulation of cell growth. This is Inosine-5'-monophosphate dehydrogenase from Methanocaldococcus jannaschii (strain ATCC 43067 / DSM 2661 / JAL-1 / JCM 10045 / NBRC 100440) (Methanococcus jannaschii).